The chain runs to 264 residues: Ribonuclease HII (264 aa).

Residues 33 to 224 (GPVAGVDEVG…VRRVASGSNT (192 aa)) enclose the RNase H type-2 domain. 3 residues coordinate a divalent metal cation: Asp39, Glu40, and Asp133. A disordered region spans residues 222–264 (SNTAEVADGQPDPRDGTAQTGEGRWSKSSHPATMRATGRAQGT).

This sequence belongs to the RNase HII family. Mn(2+) is required as a cofactor. It depends on Mg(2+) as a cofactor.

It is found in the cytoplasm. The catalysed reaction is Endonucleolytic cleavage to 5'-phosphomonoester.. Its function is as follows. Endonuclease that specifically degrades the RNA of RNA-DNA hybrids. This is Ribonuclease HII from Mycobacterium bovis (strain BCG / Pasteur 1173P2).